The following is a 274-amino-acid chain: Undecaprenyl-diphosphatase (274 aa).

Transmembrane regions (helical) follow at residues 6–26, 45–65, 94–114, 117–137, 155–174, 191–211, 223–243, and 253–273; these read SLFI…LPVS, AKTF…VMFW, GHIL…HDVI, LFAP…LLAA, YRQA…PGFS, YAAA…ASGL, GDLP…LIAI, and ISFV…YMVF.

The protein belongs to the UppP family.

The protein localises to the cell inner membrane. The enzyme catalyses di-trans,octa-cis-undecaprenyl diphosphate + H2O = di-trans,octa-cis-undecaprenyl phosphate + phosphate + H(+). In terms of biological role, catalyzes the dephosphorylation of undecaprenyl diphosphate (UPP). Confers resistance to bacitracin. The sequence is that of Undecaprenyl-diphosphatase from Serratia proteamaculans (strain 568).